The sequence spans 156 residues: H/ACA ribonucleoprotein complex subunit 2-like protein (156 aa).

This sequence belongs to the eukaryotic ribosomal protein eL8 family. As to quaternary structure, component of the small nucleolar ribonucleoprotein particle containing H/ACA-type snoRNAs (H/ACA snoRNPs).

Its subcellular location is the nucleus. The protein localises to the nucleolus. In terms of biological role, required for ribosome biogenesis. Part of a complex which catalyzes pseudouridylation of rRNA. This involves the isomerization of uridine such that the ribose is subsequently attached to C5, instead of the normal N1. Pseudouridine ('psi') residues may serve to stabilize the conformation of rRNAs. The protein is H/ACA ribonucleoprotein complex subunit 2-like protein of Arabidopsis thaliana (Mouse-ear cress).